Reading from the N-terminus, the 115-residue chain is T cell receptor beta variable 7-6 (115 aa).

The signal sequence occupies residues 1 to 21; sequence MGTSLLCWVVLGFLGTDHTGA. In terms of domain architecture, Ig-like spans 22–115; the sequence is GVSQSPRYKV…SAMYRCASSL (94 aa). Cysteines 42 and 111 form a disulfide.

In terms of assembly, alpha-beta TR is a heterodimer composed of an alpha and beta chain; disulfide-linked. The alpha-beta TR is associated with the transmembrane signaling CD3 coreceptor proteins to form the TR-CD3 (TcR or TCR). The assembly of alpha-beta TR heterodimers with CD3 occurs in the endoplasmic reticulum where a single alpha-beta TR heterodimer associates with one CD3D-CD3E heterodimer, one CD3G-CD3E heterodimer and one CD247 homodimer forming a stable octameric structure. CD3D-CD3E and CD3G-CD3E heterodimers preferentially associate with TR alpha and TR beta chains, respectively. The association of the CD247 homodimer is the last step of TcR assembly in the endoplasmic reticulum and is required for transport to the cell surface.

It localises to the cell membrane. V region of the variable domain of T cell receptor (TR) beta chain that participates in the antigen recognition. Alpha-beta T cell receptors are antigen specific receptors which are essential to the immune response and are present on the cell surface of T lymphocytes. Recognize peptide-major histocompatibility (MH) (pMH) complexes that are displayed by antigen presenting cells (APC), a prerequisite for efficient T cell adaptive immunity against pathogens. Binding of alpha-beta TR to pMH complex initiates TR-CD3 clustering on the cell surface and intracellular activation of LCK that phosphorylates the ITAM motifs of CD3G, CD3D, CD3E and CD247 enabling the recruitment of ZAP70. In turn ZAP70 phosphorylates LAT, which recruits numerous signaling molecules to form the LAT signalosome. The LAT signalosome propagates signal branching to three major signaling pathways, the calcium, the mitogen-activated protein kinase (MAPK) kinase and the nuclear factor NF-kappa-B (NF-kB) pathways, leading to the mobilization of transcription factors that are critical for gene expression and essential for T cell growth and differentiation. The T cell repertoire is generated in the thymus, by V-(D)-J rearrangement. This repertoire is then shaped by intrathymic selection events to generate a peripheral T cell pool of self-MH restricted, non-autoaggressive T cells. Post-thymic interaction of alpha-beta TR with the pMH complexes shapes TR structural and functional avidity. The polypeptide is T cell receptor beta variable 7-6 (Homo sapiens (Human)).